Here is a 360-residue protein sequence, read N- to C-terminus: Epoxide hydrolase 3 (360 aa).

The helical transmembrane segment at 22–42 (AFMWSLVFSVALVAAAVYGCI) threads the bilayer. Residue D173 is the Nucleophile of the active site. The Proton donor role is filled by Y281. H337 serves as the catalytic Proton acceptor.

The protein belongs to the AB hydrolase superfamily. Epoxide hydrolase family.

The protein localises to the microsome membrane. The enzyme catalyses an epoxide + H2O = an ethanediol. The catalysed reaction is 9,10-epoxyoctadecanoate + H2O = 9,10-dihydroxyoctadecanoate. It catalyses the reaction 9,10-epoxy-(12Z)-octadecenoate + H2O = 9,10-dihydroxy-(12Z)-octadecenoate. It carries out the reaction 8,9-epoxy-(5Z,11Z,14Z)-eicosatrienoate + H2O = 8,9-dihydroxy-(5Z,11Z,14Z)-eicosatrienoate. The enzyme catalyses 11,12-epoxy-(5Z,8Z,14Z)-eicosatrienoate + H2O = 11,12-dihydroxy-(5Z,8Z,14Z)-eicosatrienoate. The catalysed reaction is 14,15-epoxy-(5Z,8Z,11Z)-eicosatrienoate + H2O = 14,15-dihydroxy-(5Z,8Z,11Z)-eicosatrienoate. Its activity is regulated as follows. Inhibited by 1-(1-acetylpiperidin-4-yl)-3-(4-(trifl uoromethoxy)phenyl)urea (TPAU), 1-cyclohexyl-3-dodecylurea (CDU), 12-(3-adamantan-1-yl-ureido)-dodecanoic acid (AUDA), 1-((3S, 5S, 7S)-adamantan-1-yl)-3-(5-(2-(2-ethoxyethoxy) ethoxy)pentyl)urea (AEPU) and to a lesser extent by 8-(3-((3S, 5S, 7S)-adamantan-1-yl)ureido) octanoic acid (AUOA). In terms of biological role, catalyzes the hydrolysis of epoxide-containing fatty acids. Active in vitro against epoxyeicosatrienoic acids (EETs) including 8,9-EET, 9,10-EET, 11,12-EET and 14,15-EET and leukotoxin. The protein is Epoxide hydrolase 3 (EPHX3) of Homo sapiens (Human).